The sequence spans 305 residues: Short-chain dehydrogenase/reductase VdtF (305 aa).

NADP(+) contacts are provided by leucine 28 and asparagine 98. Residue serine 192 is the Proton donor of the active site. NADP(+)-binding residues include tyrosine 206, lysine 210, and threonine 241. Catalysis depends on tyrosine 206, which acts as the Proton acceptor. Lysine 210 serves as the catalytic Lowers pKa of active site Tyr.

Belongs to the short-chain dehydrogenases/reductases (SDR) family.

The catalysed reaction is methyl 2-[(3S)-9,10-dihydroxy-7-methoxy-1-oxo-1H,3H,4H-naphtho[2,3-c]pyran-3-yl]acetate + AH2 = semiviriditoxin + A. The enzyme catalyses 9,10-dihydroxy-7-methoxy-3-(2-oxopropyl)-1H-benzo[g]isochromen-1-one + AH2 = (3S)-9,10-dihydroxy-7-methoxy-3-(2-oxopropyl)-1H,3H,4H-naphtho[2,3-c]pyran-1-one + A. Its pathway is secondary metabolite biosynthesis. Short-chain dehydrogenase/reductase; part of the gene cluster that mediates the biosynthesis of viriditoxin, one of the 'classical' secondary metabolites produced by fungi and that has antibacterial activity. The first step is performed by the polyketide synthase VdtA which condenses one acetyl-CoA and 6 malonyl-CoA units to form the heptaketide monomer backbone of viriditoxin. The product of VdtA is then O-methylated on C7 by the O-methyltransferase VdtC. The O-methyl group is important for the stereoselective coupling of the monomers at the final step of viriditoxin biosynthesis. The short-chain dehydrogenase/reductase VdtF then acts as a stereospecific reductase converting the pyrone to dihydropyrone via the reduction of the C3-C4 double bond. The FAD-binding monooxygenase VdtE then converts the ketone group into a methyl-ester group to yield semi-viriditoxin. Finally, the laccase VdtB is involved in dimerization of 2 semi-viriditoxin molecules to yield the final viriditoxin. VdtB is responsible for the regioselective 6,6'-coupling of semi-viriditoxin, which yields (M)-viriditoxin and (P)-viriditoxin at a ratio of 1:2. The non-catalytic carboxylesterase-like protein VdtD affects the stereochemistical outcome of the coupling. The highly reducing polyketide synthase VdtX is not involved in viriditoxin synthesis, but might possibly play a role in the production of additional metabolites not identified yet. The protein is Short-chain dehydrogenase/reductase VdtF of Byssochlamys spectabilis (Paecilomyces variotii).